The sequence spans 517 residues: Mucin-like protein 3 (517 aa).

Positions 1 to 29 (MAQPVHSLCSAFGLQCCLLFLLASWGAGA) are cleaved as a signal peptide. The Extracellular portion of the chain corresponds to 30 to 448 (TTFQEYQKTG…GENDSFPAWA (419 aa)). A disordered region spans residues 67–341 (SGQRPPELPK…PTENLGNTTL (275 aa)). Basic residues predominate over residues 83–93 (QKRHCNTTRHS). N88 carries an N-linked (GlcNAc...) asparagine glycan. Basic and acidic residues predominate over residues 105–116 (TIDHKSSTDNHE). An N-linked (GlcNAc...) asparagine glycan is attached at N124. A compositionally biased stretch (polar residues) spans 169 to 179 (RKSTTGKSTVT). The segment covering 180–190 (RKSDKTGRPLE) has biased composition (basic and acidic residues). Positions 194–213 (STLDKTSTSSHKTTTSFHNS) are enriched in low complexity. Polar residues-rich tracts occupy residues 214–225 (GNSQTKQKSTSF), 232–243 (ASKTTYKTTGTP), and 263–283 (TKTTKNIQETISANELTQSLA). Residues 305 to 317 (TENRERTANENKK) are compositionally biased toward basic and acidic residues. N338 carries N-linked (GlcNAc...) asparagine glycosylation. Residues 449–469 (IVIVVLVAVILLLVFLGLIFL) traverse the membrane as a helical segment. The Cytoplasmic segment spans residues 470 to 517 (VSYMMRTRRTLTQNTQYNDAEDEGGPNSYPVYLMEQQNLGMGQIPSPR).

Detected in lung, esophagus, stomach, rectum, skin, cervix, testis, kidney, uterus and small intestine. Expressed in pancreas (at protein level).

The protein localises to the cell membrane. The protein resides in the cytoplasm. In terms of biological role, may modulate NF-kappaB signaling and play a role in cell growth. In Homo sapiens (Human), this protein is Mucin-like protein 3.